The chain runs to 32 residues: Delta-actitoxin-Eqd1a (32 aa).

It belongs to the sea anemone short toxin (type III) family. Post-translationally, contains 4 disulfide bonds.

It is found in the secreted. The protein localises to the nematocyst. Binds specifically to sodium channels (Nav) of the axonal membrane of crayfish and prolongs the falling phase of the action potential. It also increases the maximum rates of rise of both action potential and resting potential. Is only active on crustaceans. The chain is Delta-actitoxin-Eqd1a from Entacmaea quadricolor (Bubble-tip anemone).